The following is an 81-amino-acid chain: Keratin-associated protein 19-3 (81 aa).

The protein belongs to the KRTAP type 19 family. As to quaternary structure, interacts with hair keratins.

In terms of biological role, in the hair cortex, hair keratin intermediate filaments are embedded in an interfilamentous matrix, consisting of hair keratin-associated proteins (KRTAP), which are essential for the formation of a rigid and resistant hair shaft through their extensive disulfide bond cross-linking with abundant cysteine residues of hair keratins. The matrix proteins include the high-sulfur and high-glycine-tyrosine keratins. The sequence is that of Keratin-associated protein 19-3 (KRTAP19-3) from Homo sapiens (Human).